The chain runs to 450 residues: Divalent metal cation transporter MntH (450 aa).

The next 11 helical transmembrane spans lie at 44–64 (LLAFVGPGYLVSVGYMDPGNW), 77–97 (TLLSVILLSNLMAILLQSLAA), 121–141 (FLLWLACEAAIIACDLAEVIG), 152–172 (IPLIGGALIAALDAFLLLLLM), 181–201 (AFVIALLAVIAVCFAVQIVAA), 218–238 (IFTNPEMLYIAIGIIGATVMP), 273–293 (IALMLALFINAAILVVAAATF), 310–330 (LLSPLLGLGIASTLFAIALLA), 366–386 (GIAIIPVIIVTAIYGERGTAD), 387–407 (LLVFSQVVLSMQLPFAVIPLV), and 419–439 (FAISPYVAAIAWIVAGVIVVL).

It belongs to the NRAMP family.

Its subcellular location is the cell inner membrane. H(+)-stimulated, divalent metal cation uptake system. This is Divalent metal cation transporter MntH from Bradyrhizobium diazoefficiens (strain JCM 10833 / BCRC 13528 / IAM 13628 / NBRC 14792 / USDA 110).